The sequence spans 167 residues: Transcription factor HES-5 (167 aa).

Residues 16 to 72 (KNRLRKPVVEKMRRDRINSSIEQLKLLLEQEFARHQPNSKLEKADILEMAVSYLKHS) form the bHLH domain. The Orange domain maps to 88 to 119 (YSEGYSWCLQEAVQFLTLHAASDTQMKLLYHF). Over residues 124–138 (APAAPAKEPPAPGAA) the composition is skewed to pro residues. The segment at 124 to 167 (APAAPAKEPPAPGAAPQPARSSAKAAAAAVSTSRQPACGLWRPW) is disordered. Over residues 139–160 (PQPARSSAKAAAAAVSTSRQPA) the composition is skewed to low complexity. The WRPW motif motif lies at 164–167 (WRPW).

In terms of assembly, transcription repression requires formation of a complex with a corepressor protein of the Groucho/TLE family.

It localises to the nucleus. In terms of biological role, transcriptional repressor of genes that require a bHLH protein for their transcription. Plays an important role as neurogenesis negative regulator. The polypeptide is Transcription factor HES-5 (Hes5) (Mus musculus (Mouse)).